Reading from the N-terminus, the 177-residue chain is ATP synthase subunit b (177 aa).

The helical transmembrane segment at G15–L35 threads the bilayer.

It belongs to the ATPase B chain family. F-type ATPases have 2 components, F(1) - the catalytic core - and F(0) - the membrane proton channel. F(1) has five subunits: alpha(3), beta(3), gamma(1), delta(1), epsilon(1). F(0) has three main subunits: a(1), b(2) and c(10-14). The alpha and beta chains form an alternating ring which encloses part of the gamma chain. F(1) is attached to F(0) by a central stalk formed by the gamma and epsilon chains, while a peripheral stalk is formed by the delta and b chains.

The protein resides in the cell membrane. Functionally, f(1)F(0) ATP synthase produces ATP from ADP in the presence of a proton or sodium gradient. F-type ATPases consist of two structural domains, F(1) containing the extramembraneous catalytic core and F(0) containing the membrane proton channel, linked together by a central stalk and a peripheral stalk. During catalysis, ATP synthesis in the catalytic domain of F(1) is coupled via a rotary mechanism of the central stalk subunits to proton translocation. Component of the F(0) channel, it forms part of the peripheral stalk, linking F(1) to F(0). This is ATP synthase subunit b from Geobacillus kaustophilus (strain HTA426).